The following is a 545-amino-acid chain: E3 ubiquitin-protein ligase ipaH9.8 (545 aa).

An interaction with target proteins region spans residues 1-242; that stretch reads MLPINNNFSL…YHGPRIYFSM (242 aa). LRR repeat units lie at residues 57–77, 78–99, 100–117, 118–139, 140–157, 158–179, 182–203, and 205–228; these read NSDE…NLPA, QITL…PVTL, KKLY…VLPP, ALES…PDSL, LTMN…SLPQ, ALKN…SEGN, VVRE…ILNL, and NECS…QRLT. The interval 243 to 250 is linker; that stretch reads SDGQQNTL. Positions 251–545 are E3 ubiquitin-protein ligase catalytic domain; that stretch reads HRPLADAVTA…SENGSQLHHS (295 aa). Positions 253–545 constitute an NEL domain; the sequence is PLADAVTAWF…SENGSQLHHS (293 aa). Cysteine 337 (glycyl thioester intermediate) is an active-site residue.

It belongs to the LRR-containing bacterial E3 ligase family. In terms of assembly, also interacts with human and mouse U2AF1 (U2AF35). Post-translationally, ubiquitinated in the presence of host E1 ubiquitin-activating enzyme, E2 ubiquitin-conjugating enzyme and ubiquitin.

The protein localises to the secreted. It localises to the host cytoplasm. It is found in the host nucleus. It catalyses the reaction S-ubiquitinyl-[E2 ubiquitin-conjugating enzyme]-L-cysteine + [acceptor protein]-L-lysine = [E2 ubiquitin-conjugating enzyme]-L-cysteine + N(6)-ubiquitinyl-[acceptor protein]-L-lysine.. Exists in an autoinhibited state in the absence of substrate protein, due to interactions of the leucine-rich repeats with NEL domain. Is activated upon binding to a substrate protein. Functionally, effector E3 ubiquitin ligase that interferes with host's ubiquitination pathway and modulates the acute inflammatory responses, thus facilitating bacterial colonization within the host cell. Interacts with IKBKG (NEMO) and TNIP1 (ABIN-1), a ubiquitin-binding adapter protein, which results in TNIP1-dependent 'Lys-27'-linked polyubiquitination of IKBKG. Consequently, polyubiquitinated IKBKG undergoes proteasome-dependent degradation, which perturbs NF-kappa-B activation during bacterial infection. Mediates polyubiquitination of host U2AF1, leading to its proteasomal degradation. Catalyzes 'Lys-48'-linked polyubiquitination and subsequent degradation of a subset of host guanylate-binding proteins (GBP1, GBP2, GBP4 and GBP6), thereby suppressing host cell defense. In contrast, host GBP3 and GBP7 are not ubiquitinated by IpaH9.8. Uses UBE2D2 (UBCH5B) as an E2 ubiquitin-conjugating enzyme. The sequence is that of E3 ubiquitin-protein ligase ipaH9.8 (ipaH9.8) from Shigella boydii serotype 18 (strain CDC 3083-94 / BS512).